Reading from the N-terminus, the 290-residue chain is Glycine-N-acyltransferase-like protein 3 (290 aa).

The enzyme catalyses an acyl-CoA + glycine = an N-acylglycine + CoA + H(+). It carries out the reaction (9Z)-octadecenoyl-CoA + glycine = N-(9Z-octadecenoyl)glycine + CoA + H(+). The catalysed reaction is hexadecanoyl-CoA + glycine = N-hexadecanoylglycine + CoA + H(+). The protein operates within lipid metabolism. Its function is as follows. Catalyzes the conjugation of long-chain fatty acyl-CoA thioester and glycine to produce long-chain N-(fatty acyl)glycine, an intermediate in the primary fatty acid amide biosynthetic pathway. This is Glycine-N-acyltransferase-like protein 3 from Mus musculus (Mouse).